Consider the following 646-residue polypeptide: Lipoteichoic acid synthase (646 aa).

Residues 1–7 (MSSQKKK) lie on the Cytoplasmic side of the membrane. The chain crosses the membrane as a helical span at residues 8–28 (ISLFAFFLLTVITITLKTYFS). At 29–43 (YYVDFSLGVKGLVQN) the chain is on the extracellular side. A helical transmembrane segment spans residues 44-64 (LILLMNPYSLVALVLSVFLFF). The Cytoplasmic segment spans residues 65–68 (KGKK). Residues 69-89 (AFWFMFIGGFLLTFLLYANVV) form a helical membrane-spanning segment. The Extracellular segment spans residues 90 to 119 (YFRFFSDFLTFSTLNQVGNVESMGGAVSAS). Residues 120–140 (FKWYDFVYFIDTLVYLFILIF) form a helical membrane-spanning segment. The Cytoplasmic portion of the chain corresponds to 141-153 (KTKWLDTKAFSKK). A helical membrane pass occupies residues 154–174 (FVPVVMAASVALFFLNLAFAE). Topologically, residues 175–646 (TDRPELLTRT…ETGPKANSKK (472 aa)) are extracellular. Mn(2+) is bound by residues Glu-255 and Thr-300. Thr-300 is a catalytic residue. Residue His-416 coordinates substrate. Asp-475 and His-476 together coordinate Mn(2+). Residues 623–638 (NPDFKKVNPSKYKYET) are compositionally biased toward basic and acidic residues. The interval 623–646 (NPDFKKVNPSKYKYETGPKANSKK) is disordered.

It belongs to the LTA synthase family. Post-translationally, proteolytically cleaved.

It is found in the cell membrane. The protein localises to the secreted. The protein operates within cell wall biogenesis; lipoteichoic acid biosynthesis. Functionally, catalyzes the polymerization of lipoteichoic acid (LTA) polyglycerol phosphate, a reaction that presumably uses phosphatidylglycerol (PG) as substrate. Is required for staphylococcal growth and cell division process. The chain is Lipoteichoic acid synthase (ltaS) from Staphylococcus aureus (strain USA300).